Reading from the N-terminus, the 455-residue chain is tRNA modification GTPase MnmE (455 aa).

Residues arginine 24, glutamate 81, and lysine 120 each coordinate (6S)-5-formyl-5,6,7,8-tetrahydrofolate. Residues 216–378 (GMTVVIAGRP…LREHLKACMG (163 aa)) form the TrmE-type G domain. Residue asparagine 226 participates in K(+) binding. GTP is bound by residues 226–231 (NAGKSS), 245–251 (TDIAGTT), 270–273 (DTAG), 335–338 (NKAD), and 359–361 (SAR). Serine 230 serves as a coordination point for Mg(2+). Residues threonine 245, isoleucine 247, and threonine 250 each coordinate K(+). Threonine 251 is a Mg(2+) binding site. Lysine 455 lines the (6S)-5-formyl-5,6,7,8-tetrahydrofolate pocket.

It belongs to the TRAFAC class TrmE-Era-EngA-EngB-Septin-like GTPase superfamily. TrmE GTPase family. Homodimer. Heterotetramer of two MnmE and two MnmG subunits. It depends on K(+) as a cofactor.

Its subcellular location is the cytoplasm. In terms of biological role, exhibits a very high intrinsic GTPase hydrolysis rate. Involved in the addition of a carboxymethylaminomethyl (cmnm) group at the wobble position (U34) of certain tRNAs, forming tRNA-cmnm(5)s(2)U34. This Pseudomonas aeruginosa (strain UCBPP-PA14) protein is tRNA modification GTPase MnmE.